We begin with the raw amino-acid sequence, 305 residues long: UDP-3-O-acyl-N-acetylglucosamine deacetylase (305 aa).

The Zn(2+) site is built by His79, His238, and Asp242. The active-site Proton donor is the His265.

Belongs to the LpxC family. Zn(2+) is required as a cofactor.

The enzyme catalyses a UDP-3-O-[(3R)-3-hydroxyacyl]-N-acetyl-alpha-D-glucosamine + H2O = a UDP-3-O-[(3R)-3-hydroxyacyl]-alpha-D-glucosamine + acetate. It functions in the pathway glycolipid biosynthesis; lipid IV(A) biosynthesis; lipid IV(A) from (3R)-3-hydroxytetradecanoyl-[acyl-carrier-protein] and UDP-N-acetyl-alpha-D-glucosamine: step 2/6. Its function is as follows. Catalyzes the hydrolysis of UDP-3-O-myristoyl-N-acetylglucosamine to form UDP-3-O-myristoylglucosamine and acetate, the committed step in lipid A biosynthesis. The protein is UDP-3-O-acyl-N-acetylglucosamine deacetylase of Pasteurella multocida (strain Pm70).